The sequence spans 30 residues: Cyclotide mech-1 (30 aa).

A cross-link (cyclopeptide (Gly-Asp)) is located at residues 1-30; that stretch reads GVIPCGESCVFIPCINKKKCSCKNKVCYRD. Intrachain disulfides connect Cys5/Cys20, Cys9/Cys22, and Cys14/Cys27.

This is a cyclic peptide. Post-translationally, contains 3 disulfide bonds.

Probably participates in a plant defense mechanism (Potential). Binds to and induces leakage in phospholipd membranes, particularly ones containing 1-palmitoyl-2-oleophosphatidylethanolamine (POPE). Not active against Gram-negative bacterium E.coli ATCC 25922 or Gram-positive bacterium S.aureus ATCC 25923 up to a concentration of 64 uM. The polypeptide is Cyclotide mech-1 (Melicytus chathamicus (Chatham Island mahoe)).